We begin with the raw amino-acid sequence, 56 residues long: Small ribosomal subunit protein bS21 (56 aa).

It belongs to the bacterial ribosomal protein bS21 family.

This is Small ribosomal subunit protein bS21 from Synechococcus sp. (strain WH7803).